A 143-amino-acid chain; its full sequence is Large ribosomal subunit protein uL11 (143 aa).

The protein belongs to the universal ribosomal protein uL11 family. In terms of assembly, part of the ribosomal stalk of the 50S ribosomal subunit. Interacts with L10 and the large rRNA to form the base of the stalk. L10 forms an elongated spine to which L12 dimers bind in a sequential fashion forming a multimeric L10(L12)X complex. In terms of processing, one or more lysine residues are methylated.

Its function is as follows. Forms part of the ribosomal stalk which helps the ribosome interact with GTP-bound translation factors. This is Large ribosomal subunit protein uL11 from Ralstonia pickettii (strain 12J).